Reading from the N-terminus, the 335-residue chain is Teichoic acids export ATP-binding protein TagH (335 aa).

The region spanning 26 to 246 (IKGLFMPKSQ…YDEFVKWFNK (221 aa)) is the ABC transporter domain. 60-67 (GINGSGKS) serves as a coordination point for ATP.

This sequence belongs to the ABC transporter superfamily. Teichoic acids exporter (TC 3.A.1.104.1) family. The complex is composed of two ATP-binding proteins (TagH) and two transmembrane proteins (TagG).

The protein localises to the cell membrane. It carries out the reaction ATP + H2O + teichoic acidSide 1 = ADP + phosphate + teichoic acidSide 2.. Functionally, part of the ABC transporter complex TagGH involved in teichoic acids export. Responsible for energy coupling to the transport system. The chain is Teichoic acids export ATP-binding protein TagH from Listeria monocytogenes serotype 4b (strain F2365).